Here is a 216-residue protein sequence, read N- to C-terminus: Ribosomal RNA small subunit methyltransferase G (216 aa).

S-adenosyl-L-methionine-binding positions include G82, L87, 135-136, and R148; that span reads AE.

Belongs to the methyltransferase superfamily. RNA methyltransferase RsmG family.

The protein resides in the cytoplasm. The enzyme catalyses guanosine(527) in 16S rRNA + S-adenosyl-L-methionine = N(7)-methylguanosine(527) in 16S rRNA + S-adenosyl-L-homocysteine. Its function is as follows. Specifically methylates the N7 position of guanine in position 527 of 16S rRNA. In Caulobacter vibrioides (strain ATCC 19089 / CIP 103742 / CB 15) (Caulobacter crescentus), this protein is Ribosomal RNA small subunit methyltransferase G.